Reading from the N-terminus, the 684-residue chain is Zinc finger BED domain-containing protein RICESLEEPER 4 (684 aa).

A BED-type zinc finger spans residues 54-113 (KRKSAIWEHFTLVDVSDGCKRASCIHCNQSLAYSSGSKNSGTSHLTRHIAEWCRVLKDRQ). Residues Cys77, Cys80, His101, and Cys106 each contribute to the Zn(2+) site. An HATC (Hobo-Ac-Tam3) domain region spans residues 595 to 680 (ELELYLEEAL…EALLCAKDWL (86 aa)).

In terms of assembly, homodimer.

It is found in the nucleus. Functionally, transposase-like protein that is essential for plant growth and development. May regulate global gene expression by recruiting other cellular factors. The chain is Zinc finger BED domain-containing protein RICESLEEPER 4 from Oryza sativa subsp. japonica (Rice).